The following is a 202-amino-acid chain: Urease accessory protein UreG (202 aa).

10–17 (GPVGSGKT) is a GTP binding site.

This sequence belongs to the SIMIBI class G3E GTPase family. UreG subfamily. In terms of assembly, homodimer. UreD, UreF and UreG form a complex that acts as a GTP-hydrolysis-dependent molecular chaperone, activating the urease apoprotein by helping to assemble the nickel containing metallocenter of UreC. The UreE protein probably delivers the nickel.

The protein resides in the cytoplasm. Facilitates the functional incorporation of the urease nickel metallocenter. This process requires GTP hydrolysis, probably effectuated by UreG. This Synechococcus sp. (strain JA-3-3Ab) (Cyanobacteria bacterium Yellowstone A-Prime) protein is Urease accessory protein UreG.